A 426-amino-acid polypeptide reads, in one-letter code: MQQIRAIVGTQWGDEGKGKIVDFLAKEADVVVRAQGGNNAGHTVEAFGKVFKLHLIPSGILYKDKLNIIGNGVVIDPESLIQEIESLEKEGISTENLKISDRAHLVMPYHKILDEEQERLRGEESLGTTKRGIGPAYTDKTERTNLRVCDMLDEEEFVQKLRTVYERKNQILTHVYHKTPMKFGELLEQFMKYGEILKPYITDTIKLLNDSIKAGKKVLLEGAQATMLDLDYGTYPYVTSSHPTVGGFCIGAGIAPKYIQEVIGVVKAYTTRVGKGPFPTELLDEIGNSIREKGREYGTTTGRPRRCGWLDLVVVRYAVLINGIDKIALTKLDTLSGLPKIKVCVGYKYEGKVLDLFPASLRVARECEPVYEEFEGWSEEEIKAAKEYEALPKSAKRYIEFIEKETGAKVFLIGTGPAREDIIIKD.

GTP is bound by residues 13–19 (GDEGKGK) and 41–43 (GHT). The Proton acceptor role is filled by Asp14. 2 residues coordinate Mg(2+): Asp14 and Gly41. Residues 14 to 17 (DEGK), 39 to 42 (NAGH), Thr129, Arg143, Gln224, Thr239, and Arg303 contribute to the IMP site. His42 acts as the Proton donor in catalysis. 299-305 (TTTGRPR) contributes to the substrate binding site. GTP contacts are provided by residues Arg305, 331–333 (KLD), and 414–416 (GTG).

This sequence belongs to the adenylosuccinate synthetase family. As to quaternary structure, homodimer. It depends on Mg(2+) as a cofactor.

It localises to the cytoplasm. The catalysed reaction is IMP + L-aspartate + GTP = N(6)-(1,2-dicarboxyethyl)-AMP + GDP + phosphate + 2 H(+). It functions in the pathway purine metabolism; AMP biosynthesis via de novo pathway; AMP from IMP: step 1/2. In terms of biological role, plays an important role in the de novo pathway of purine nucleotide biosynthesis. Catalyzes the first committed step in the biosynthesis of AMP from IMP. The protein is Adenylosuccinate synthetase of Caldicellulosiruptor bescii (strain ATCC BAA-1888 / DSM 6725 / KCTC 15123 / Z-1320) (Anaerocellum thermophilum).